The chain runs to 380 residues: Succinyl-diaminopimelate desuccinylase (380 aa).

Zn(2+) is bound at residue His69. Residue Asp71 is part of the active site. Asp102 contacts Zn(2+). The active-site Proton acceptor is the Glu135. Positions 136, 164, and 353 each coordinate Zn(2+).

It belongs to the peptidase M20A family. DapE subfamily. In terms of assembly, homodimer. It depends on Zn(2+) as a cofactor. Co(2+) is required as a cofactor.

It carries out the reaction N-succinyl-(2S,6S)-2,6-diaminopimelate + H2O = (2S,6S)-2,6-diaminopimelate + succinate. The protein operates within amino-acid biosynthesis; L-lysine biosynthesis via DAP pathway; LL-2,6-diaminopimelate from (S)-tetrahydrodipicolinate (succinylase route): step 3/3. Catalyzes the hydrolysis of N-succinyl-L,L-diaminopimelic acid (SDAP), forming succinate and LL-2,6-diaminopimelate (DAP), an intermediate involved in the bacterial biosynthesis of lysine and meso-diaminopimelic acid, an essential component of bacterial cell walls. The protein is Succinyl-diaminopimelate desuccinylase of Cereibacter sphaeroides (strain ATCC 17025 / ATH 2.4.3) (Rhodobacter sphaeroides).